Consider the following 148-residue polypeptide: Deoxyuridine 5'-triphosphate nucleotidohydrolase (148 aa).

Substrate is bound by residues 68–70 (RSG), Asn81, 85–87 (TID), and Lys95.

The protein belongs to the dUTPase family. It depends on Mg(2+) as a cofactor.

It catalyses the reaction dUTP + H2O = dUMP + diphosphate + H(+). It functions in the pathway pyrimidine metabolism; dUMP biosynthesis; dUMP from dCTP (dUTP route): step 2/2. This enzyme is involved in nucleotide metabolism: it produces dUMP, the immediate precursor of thymidine nucleotides and it decreases the intracellular concentration of dUTP so that uracil cannot be incorporated into DNA. In Thermoanaerobacter sp. (strain X514), this protein is Deoxyuridine 5'-triphosphate nucleotidohydrolase.